The following is a 243-amino-acid chain: Phosphoribosylaminoimidazole-succinocarboxamide synthase (243 aa).

The protein belongs to the SAICAR synthetase family.

The catalysed reaction is 5-amino-1-(5-phospho-D-ribosyl)imidazole-4-carboxylate + L-aspartate + ATP = (2S)-2-[5-amino-1-(5-phospho-beta-D-ribosyl)imidazole-4-carboxamido]succinate + ADP + phosphate + 2 H(+). The protein operates within purine metabolism; IMP biosynthesis via de novo pathway; 5-amino-1-(5-phospho-D-ribosyl)imidazole-4-carboxamide from 5-amino-1-(5-phospho-D-ribosyl)imidazole-4-carboxylate: step 1/2. This is Phosphoribosylaminoimidazole-succinocarboxamide synthase from Lactiplantibacillus plantarum (strain ATCC BAA-793 / NCIMB 8826 / WCFS1) (Lactobacillus plantarum).